Consider the following 474-residue polypeptide: Serine/threonine-protein kinase VRK3 (474 aa).

The span at 41-58 (HVSSFQGSKRGLNSSFET) shows a compositional bias: polar residues. Positions 41-152 (HVSSFQGSKR…SRVTTSLEAL (112 aa)) are disordered. A Nuclear localization signal motif is present at residues 49 to 64 (KRGLNSSFETSPKKVK). Phosphoserine occurs at positions 54, 55, 59, 82, 83, and 90. A compositionally biased stretch (low complexity) spans 88–101 (TLSSSERSKGSGSR). The span at 107–149 (SSPQKTRKSPQVTRGSPQKTSCSPQKTRQSPQTLKRSRVTTSL) shows a compositional bias: polar residues. S108 bears the Phosphoserine; by CDK5 mark. A phosphoserine mark is found at S115 and S122. The region spanning 166 to 457 (WKLKSFQTRD…MLRNNLEALL (292 aa)) is the Protein kinase domain.

The protein belongs to the protein kinase superfamily. CK1 Ser/Thr protein kinase family. VRK subfamily. In terms of assembly, interacts with DUSP3. Interacts with RAN. Interacts with HSP70/HSPA1A. Post-translationally, phosphorylated at Ser-108 by CDK5; leading to protection of the cell against H2O2-induced apoptosis. In terms of processing, ubiquitinated by RNF144A.

The protein resides in the nucleus. Its subcellular location is the cytoplasm. It carries out the reaction L-seryl-[protein] + ATP = O-phospho-L-seryl-[protein] + ADP + H(+). Functionally, plays a role in the regulation of the cell cycle by phosphorylating the nuclear envelope protein barrier-to-autointegration factor/BAF that is required for disassembly and reassembly, respectively, of the nuclear envelope during mitosis. Under normal physiological conditions, negatively regulates ERK activity along with VHR/DUSP3 phosphatase in the nucleus, causing timely and transient action of ERK. Stress conditions activate CDK5 which phosphorylates VRK3 to increase VHR phosphatase activity and suppress prolonged ERK activation that causes cell death. For example, upon glutamate induction, promotes nuclear localization of HSP70/HSPA1A to inhibit ERK activation via VHR/DUSP3 phosphatase. This chain is Serine/threonine-protein kinase VRK3 (VRK3), found in Homo sapiens (Human).